We begin with the raw amino-acid sequence, 326 residues long: DnaJ homolog subfamily B member 6 (326 aa).

Positions 2 to 69 constitute a J domain; sequence VDYYEVLGVQ…KKRDIYDKYG (68 aa). The tract at residues 2-146 is interaction with HSP70; the sequence is VDYYEVLGVQ…TGSFFSAFSG (145 aa). An interaction with KRT18 region spans residues 119–242; that stretch reads FEDFFGNRRG…ADDDALAEER (124 aa). Arg135 carries the post-translational modification Omega-N-methylarginine. Residues 249–326 are disordered; it reads ALPAQPAGLR…KKKKSTKGNH (78 aa). Residue Ser277 is modified to Phosphoserine.

As to quaternary structure, homooligomer. Interacts with BAG3, HSPB8 and STUB1. Interacts with ALKBH1. Interacts with HSP70, KRT18 and PTTG.

The protein localises to the cytoplasm. It is found in the perinuclear region. Its subcellular location is the nucleus. The protein resides in the myofibril. It localises to the sarcomere. The protein localises to the z line. Functionally, has a stimulatory effect on the ATPase activity of HSP70 in a dose-dependent and time-dependent manner and hence acts as a co-chaperone of HSP70. Plays an indispensable role in the organization of KRT8/KRT18 filaments. Acts as an endogenous molecular chaperone for neuronal proteins including huntingtin. Suppresses aggregation and toxicity of polyglutamine-containing, aggregation-prone proteins. Also reduces cellular toxicity and caspase-3 activity. This is DnaJ homolog subfamily B member 6 (DNAJB6) from Pongo abelii (Sumatran orangutan).